Reading from the N-terminus, the 332-residue chain is MKVTFEQLKAAFNRVLISRGVDSETADACAEMFARTTESGVYSHGVNRFPRFIQQLENGDIIPDAQPKRITSLGAIEQWDAQRSIGNLTAKKMMDRAIELAADHGIGLVALRNANHWMRGGSYGWQAAEKGYIGICWTNSIAVMPPWGAKECRIGTNPLIVAIPSTPITMVDMSMSMFSYGMLEVNRLAGRQLPVDGGFDDEGNLTKEPGVIEKNRRILPMGYWKGSGMSIVLDMIATLLSDGASVAEVTEDNSDEYGISQIFIAIEVDKLIDGPTRDAKLQRIMDYVTSAERADENQAIRLPGHEFTTLLAENRRNGITVDDSVWAKIQAL.

Histidine 44 acts as the Proton donor in catalysis. NAD(+) contacts are provided by residues 168–174 (ITMVDMS), 224–225 (WK), and 304–306 (GHE).

The protein belongs to the LDH2/MDH2 oxidoreductase family. DlgD subfamily. As to quaternary structure, homodimer.

It localises to the cytoplasm. It catalyses the reaction 3-dehydro-L-gulonate + NAD(+) = 2,3-dioxo-L-gulonate + NADH + H(+). The enzyme catalyses 3-dehydro-L-gulonate + NADP(+) = 2,3-dioxo-L-gulonate + NADPH + H(+). Functionally, catalyzes the reduction of 2,3-diketo-L-gulonate in the presence of NADH, to form 3-keto-L-gulonate. This is 2,3-diketo-L-gulonate reductase from Escherichia coli O81 (strain ED1a).